A 497-amino-acid chain; its full sequence is Intermediate filament protein A (497 aa).

Residues 1–32 (MSDLNDRLASYIEKVRFLEAQNRKLAADLDLL) form a coil 1A region. Residues 1-342 (MSDLNDRLAS…KMLEGEENRA (342 aa)) form the IF rod domain. Residues 33-46 (RGRWGKDTLSVRAM) are linker 1. The segment at 47–184 (YEGELQEARK…RVHDQEIAEL (138 aa)) is coil 1B. The interval 185–202 (QAMASRDTTPENREYFKN) is linker 12. Residues 203 to 342 (ELASAIRDIR…KMLEGEENRA (140 aa)) form a coil 2 region. The tract at residues 343–497 (GLRQLVEQVV…THIQRSSHTI (155 aa)) is tail. The region spanning 375-493 (SRTSFQRSAK…EERATHIQRS (119 aa)) is the LTD domain.

This sequence belongs to the intermediate filament family. As to quaternary structure, a and B can form homopolymers. In terms of tissue distribution, giant body muscle cells.

Its subcellular location is the cytoplasm. The polypeptide is Intermediate filament protein A (Ascaris suum (Pig roundworm)).